The following is a 61-amino-acid chain: Potassium channel toxin alpha-KTx 6.6 (61 aa).

An N-terminal signal peptide occupies residues 1–23 (MNAKFILLLLVVATTMLLPDTQG). 4 cysteine pairs are disulfide-bonded: C29–C50, C35–C55, C39–C57, and C45–C60. Cysteine amide is present on C60.

This sequence belongs to the short scorpion toxin superfamily. Potassium channel inhibitor family. Alpha-KTx 06 subfamily. In terms of tissue distribution, expressed by the venom gland.

The protein localises to the secreted. Blocker of voltage-gated potassium channels. The sequence is that of Potassium channel toxin alpha-KTx 6.6 from Opistophthalmus carinatus (African yellow leg scorpion).